The following is a 60-amino-acid chain: Large ribosomal subunit protein bL32 (60 aa).

It belongs to the bacterial ribosomal protein bL32 family.

The sequence is that of Large ribosomal subunit protein bL32 from Kosmotoga olearia (strain ATCC BAA-1733 / DSM 21960 / TBF 19.5.1).